The sequence spans 1337 residues: Partitioning defective 3 homolog (1337 aa).

The residue at position 25 (serine 25) is a Phosphoserine. Disordered regions lie at residues 81–109 (EQDPHHGGDGTSASSTGTQSPEIFGSELG) and 143–263 (SSDP…LENM). Position 91 is a phosphothreonine (threonine 91). Low complexity predominate over residues 91–100 (TSASSTGTQS). Polar residues-rich tracts occupy residues 150–163 (GLSTSVSDNNFSSE) and 171–188 (TRWSTTAGFLKQNTTGSP). Phosphoserine is present on residues serine 156 and serine 174. Positions 190–203 (TCDRKKDENYRSLP) are enriched in basic and acidic residues. The segment covering 207 to 224 (SSWSNQFQRDNARSSLSA) has biased composition (polar residues). Residues 271–359 (MVKLVQVPND…ARVIWFHVVP (89 aa)) enclose the PDZ 1 domain. Phosphoserine is present on serine 383. Residues 397-441 (NAPQALPRAPRLSQPPEQLDAHPRLPHSAHASTKPPTAPALAPPN) form a disordered region. PDZ domains are found at residues 461-546 (NIQL…LVFR) and 590-677 (EVPL…GMIQ). Tyrosine 489 is modified (phosphotyrosine). 6 positions are modified to phosphoserine: serine 692, serine 695, serine 715, serine 728, serine 809, and serine 827. The tract at residues 712-936 (RRISHSLYSG…AAIDKSYDKP (225 aa)) is interaction with PRKCI and PRKCZ. At lysine 834 the chain carries N6-acetyllysine. Serine 837 bears the Phosphoserine mark. Lysine 851 is subject to N6-acetyllysine. 2 positions are modified to phosphoserine: serine 852 and serine 873. 5 disordered regions span residues 866–888 (VDDQRAGSPNRDVGPSLGLKKSS), 932–1015 (SYDK…AKKG), 1028–1055 (KHRKDDKMEKMGRIKIQDSFTSEEDRVR), 1110–1271 (LNAR…LGGH), and 1284–1337 (LLRQ…PFYS). Lysine 885 carries the post-translational modification N6-acetyllysine. The segment at 935–1337 (KPMVDDDDEG…TPEKGRPFYS (403 aa)) is interaction with FRMD4A. The span at 939 to 953 (DDDDEGMETLEEDTE) shows a compositional bias: acidic residues. Serine 962 is subject to Phosphoserine; by AURKA. 2 positions are modified to phosphoserine: serine 971 and serine 973. Basic and acidic residues-rich tracts occupy residues 981 to 1009 (DPEKRDKAEKKKDKAGKDKKKDREKEKDK) and 1030 to 1043 (RKDDKMEKMGRIKI). The residue at position 1046 (serine 1046) is a Phosphoserine. Positions 1050–1082 (EEDRVRMKEEQERIQAKTREFRERQARERDYAE) form a coiled coil. Positions 1138–1147 (PGDSNRSTPS) are enriched in polar residues. The span at 1148–1175 (NHDRIQRLRQEFQQAKQDEDVEDRRRTY) shows a compositional bias: basic and acidic residues. 3 coiled-coil regions span residues 1149–1172 (HDRIQRLRQEFQQAKQDEDVEDRR), 1199–1222 (VQVQRQRQEERESFQQAQRQYSSL), and 1278–1299 (MLETQELLRQEQRRKEQQLKKQ). The segment covering 1180–1203 (SWSSSRPASQSGRHSVSVEVQVQR) has biased composition (low complexity). A compositionally biased stretch (polar residues) spans 1219–1240 (YSSLPRQSRKNASSVSQDSWEQ). A compositionally biased stretch (basic and acidic residues) spans 1284-1296 (LLRQEQRRKEQQL). A compositionally biased stretch (polar residues) spans 1318–1327 (SQVARLNRLQ). The segment covering 1328-1337 (TPEKGRPFYS) has biased composition (basic and acidic residues). Lysine 1331 is subject to N6-acetyllysine.

The protein belongs to the PAR3 family. In terms of assembly, component of a complex whose core is composed of ARHGAP17, AMOT, PALS1, PATJ and PARD3/PAR3. Interacts (via PDZ 1 domain) with PARD6A, PARD6B and F11R/JAM1. Interacts with AURKA, AURKB and SIRT2. Interacts with PRKCI. Interacts with PRKCZ. Part of a complex with PARD6A or PARD6B, PRKCI or PRKCZ and CDC42 or RAC1. Interacts with LIMK2 and CDH5. Component of the Par polarity complex, composed of at least phosphorylated PRKCZ, PARD3 and TIAM1. Directly interacts with TIAM1 and TIAM2. Interacts with ECT2 and FBF1. Interacts (via PDZ 3 domain) with PTEN (via C-terminus). Interacts (via coiled-coil domain) with FRMD4A. Found in a complex with PARD3, CYTH1 and FRMD4A. Interacts with SAPCD2. Interacts with PRKCA. Interacts with PRKCZ. In terms of processing, acetylated. Deacetylated by SIRT2, thereby inhibiting Schwann cell peripheral myelination. Phosphorylation at Ser-827 by PRKCZ and PRKCI occurs at the most apical tip of epithelial cell-cell contacts during the initial phase of tight junction formation and may promote dissociation of the complex with PARD6. EGF-induced Tyr-1127 phosphorylation mediates dissociation from LIMK2. Phosphorylation by AURKA at Ser-962 is required for the normal establishment of neuronal polarity. In terms of tissue distribution, isoform 1 is predominantly expressed in lung, glandular stomach, prostate, ovary and uterus. Isoform 1 is also expressed in brain, with a high expression in the cortex, hippocampus and in the striatum. Isoform 2 is predominantly expressed in intestinal epithelial cells, kidney and prostate.

The protein localises to the cytoplasm. It localises to the endomembrane system. It is found in the cell junction. The protein resides in the tight junction. Its subcellular location is the adherens junction. The protein localises to the cell cortex. It localises to the cytoskeleton. It is found in the cell membrane. In terms of biological role, adapter protein involved in asymmetrical cell division and cell polarization processes. Seems to play a central role in the formation of epithelial tight junctions. Association with PARD6B may prevent the interaction of PARD3 with F11R/JAM1, thereby preventing tight junction assembly. The PARD6-PARD3 complex links GTP-bound Rho small GTPases to atypical protein kinase C proteins. Required for establishment of neuronal polarity and normal axon formation in cultured hippocampal neurons. Involved in Schwann cell peripheral myelination. Targets the phosphatase PTEN to cell junctions. The sequence is that of Partitioning defective 3 homolog (Pard3) from Rattus norvegicus (Rat).